The chain runs to 281 residues: Ribosomal RNA small subunit methyltransferase A (281 aa).

H25, L27, G52, E74, D100, and N119 together coordinate S-adenosyl-L-methionine.

The protein belongs to the class I-like SAM-binding methyltransferase superfamily. rRNA adenine N(6)-methyltransferase family. RsmA subfamily.

Its subcellular location is the cytoplasm. It carries out the reaction adenosine(1518)/adenosine(1519) in 16S rRNA + 4 S-adenosyl-L-methionine = N(6)-dimethyladenosine(1518)/N(6)-dimethyladenosine(1519) in 16S rRNA + 4 S-adenosyl-L-homocysteine + 4 H(+). Specifically dimethylates two adjacent adenosines (A1518 and A1519) in the loop of a conserved hairpin near the 3'-end of 16S rRNA in the 30S particle. May play a critical role in biogenesis of 30S subunits. This chain is Ribosomal RNA small subunit methyltransferase A, found in Paramagnetospirillum magneticum (strain ATCC 700264 / AMB-1) (Magnetospirillum magneticum).